A 54-amino-acid polypeptide reads, in one-letter code: Hemoglobin subunit omega (54 aa).

The region spanning 2-54 (HWTAEEKQIILAIWAKIDIEEAGAAALSRLLVVYPWTQRYFKNFGNLSSPTAI) is the Globin domain.

This sequence belongs to the globin family.

Its function is as follows. Hemoglobin omega chain is an embryonic-type beta-type chain found in prenatal and neonatal marsupials. This Notamacropus eugenii (Tammar wallaby) protein is Hemoglobin subunit omega.